We begin with the raw amino-acid sequence, 203 residues long: Small ribosomal subunit protein uS4 (203 aa).

The region spanning R93–S153 is the S4 RNA-binding domain.

It belongs to the universal ribosomal protein uS4 family. Part of the 30S ribosomal subunit. Contacts protein S5. The interaction surface between S4 and S5 is involved in control of translational fidelity.

In terms of biological role, one of the primary rRNA binding proteins, it binds directly to 16S rRNA where it nucleates assembly of the body of the 30S subunit. Functionally, with S5 and S12 plays an important role in translational accuracy. In Chlorobium phaeovibrioides (strain DSM 265 / 1930) (Prosthecochloris vibrioformis (strain DSM 265)), this protein is Small ribosomal subunit protein uS4.